We begin with the raw amino-acid sequence, 338 residues long: Methionine import ATP-binding protein MetN 1 (338 aa).

One can recognise an ABC transporter domain in the interval 2–241; that stretch reads IELHQVSKSF…AKHATTKRFV (240 aa). Residue 38–45 participates in ATP binding; that stretch reads GYSGAGKS.

This sequence belongs to the ABC transporter superfamily. Methionine importer (TC 3.A.1.24) family. The complex is composed of two ATP-binding proteins (MetN), two transmembrane proteins (MetI) and a solute-binding protein (MetQ).

It is found in the cell membrane. The enzyme catalyses L-methionine(out) + ATP + H2O = L-methionine(in) + ADP + phosphate + H(+). It catalyses the reaction D-methionine(out) + ATP + H2O = D-methionine(in) + ADP + phosphate + H(+). Its function is as follows. Part of the ABC transporter complex MetNIQ involved in methionine import. Responsible for energy coupling to the transport system. The polypeptide is Methionine import ATP-binding protein MetN 1 (Listeria innocua serovar 6a (strain ATCC BAA-680 / CLIP 11262)).